Consider the following 686-residue polypeptide: Putative pentatricopeptide repeat-containing protein At3g49142 (686 aa).

PPR repeat units follow at residues 73–103 (NSSLGVKLMRAYASLKDVASARKVFDEIPER), 104–138 (NVIIINVMIRSYVNNGFYGEGVKVFGTMCGCNVRP), 139–173 (DHYTFPCVLKACSCSGTIVIGRKIHGSATKVGLSS), 174–204 (TLFVGNGLVSMYGKCGFLSEARLVLDEMSRR), 205–239 (DVVSWNSLVVGYAQNQRFDDALEVCREMESVKISH), 240–272 (DAGTMASLLPAVSNTTTENVMYVKDMFFKMGKK), 273–307 (SLVSWNVMIGVYMKNAMPVEAVELYSRMEADGFEP), 308–342 (DAVSITSVLPACGDTSALSLGKKIHGYIERKKLIP), 343–373 (NLLLENALIDMYAKCGCLEKARDVFENMKSR), 374–408 (DVVSWTAMISAYGFSGRGCDAVALFSKLQDSGLVP), 409–439 (DSIAFVTTLAACSHAGLLEEGRSCFKLMTDH), and 445–475 (RLEHLACMVDLLGRAGKVKEAYRFIQDMSME). The type E motif stretch occupies residues 480 to 555 (VWGALLGACR…NPGASNVEVN (76 aa)). The segment at 556 to 586 (RIIHTFLVGDRSHPQSDEIYRELDVLVKKMK) is type E(+) motif. Residues 587 to 686 (ELGYVPDSES…FGVCSCGDYW (100 aa)) form a type DYW motif region.

Belongs to the PPR family. PCMP-H subfamily.

The protein is Putative pentatricopeptide repeat-containing protein At3g49142 (PCMP-H77) of Arabidopsis thaliana (Mouse-ear cress).